Here is a 335-residue protein sequence, read N- to C-terminus: Partner of xrn-2 protein 1 (335 aa).

The XRN2-binding (XTBD) domain occupies 7–91 (VEAEKKLWES…SYVKASAAKK (85 aa)). Residues 95–119 (VKTSDLEGASDESKKVKMEKSPSPV) are disordered. The span at 105–114 (DESKKVKMEK) shows a compositional bias: basic and acidic residues.

In terms of assembly, interacts (via N-terminus) with xrn-2; the interaction is direct.

Its subcellular location is the nucleus. The protein resides in the nucleolus. It localises to the nucleoplasm. Plays a role in maintenance of steady-state concentration and turnover of microRNAs (miRNA) by degradation of mature miRNA in complex with the exoribonuclease xrn-2. Stabilizes and enhances the accumulation and activity of the exoribonuclease xrn-2, and thus contributes to miRNA turnover. The polypeptide is Partner of xrn-2 protein 1 (Caenorhabditis elegans).